The chain runs to 657 residues: MTQLAIGKPTPLGAHYDGQGVNFTLFSAHAERVELCVFDANGQEHRYDLPGHSGDIWHGYLPDARPGLRYGYRVHGPWQPAEGHRFNPAKLLIDPCARQIDGEFKDNPLLHAGHNEPDYRDNASIAPKCVVVVDHYDWEDDAPPRMPWGCTIIYEAHVKGLTYLHPEIPVEIRGTYKALGHPVMINYLKQLGITALELLPVAQFASEPRLQRMGLSNYWGYNPVAMFALHPAYACSPETALDEFRDAIKALHKAGIEVILDIVLNHSAELDLDGPLFSLRGIDNRSYYWIREDGDYHNWTGCGNTLNLSHPAVVDYASACLRYWVETCHVDGFRFDLAAVMGRTPEFRQDALLFTAIQNCPVLSQVKLIAEPWDIAPGGYQVGNFPPLFAEWNDHFRDAARRFWLHYDLPLGAFAGRFAASSDVFKRNGRLPSAAINLVTAHDGFTLRDCVCFNHKHNEANGEENRDGTNNNYSNNHGKEGLGGTLDLVERRRDSIHALLTTLLLSQGTPMLLAGDEHGHSQRGNNNAYCQDNQLTWLDWSQASSGLTAFTAALIHLRKRIPALMENRWWEEGDGNVRWLNRYAQPLSTDEWQNGPKQLQILLSDRFLIAINATLEVTEIVLPAGEWHAIPPFAGEDNPVITAVWQGPAHGLCVFQR.

Residue D336 is the Nucleophile of the active site. Residue E371 is the Proton donor of the active site. The interval 460–479 (ANGEENRDGTNNNYSNNHGK) is disordered.

This sequence belongs to the glycosyl hydrolase 13 family.

It carries out the reaction Hydrolysis of (1-&gt;6)-alpha-D-glucosidic linkages to branches with degrees of polymerization of three or four glucose residues in limit dextrin.. It functions in the pathway glycan degradation; glycogen degradation. Removes maltotriose and maltotetraose chains that are attached by 1,6-alpha-linkage to the limit dextrin main chain, generating a debranched limit dextrin. In Escherichia coli (strain UTI89 / UPEC), this protein is Glycogen debranching enzyme.